Reading from the N-terminus, the 450-residue chain is Ornithine decarboxylase (450 aa).

Residue Lys-59 is modified to N6-(pyridoxal phosphate)lysine. Residues Ser-190, Gly-227, and 264–267 each bind pyridoxal 5'-phosphate; that span reads EPGR. Ser-293 bears the Phosphoserine; by CK2 mark. Residue 321–322 participates in substrate binding; that stretch reads YD. Cys-350 functions as the Proton donor; shared with dimeric partner in the catalytic mechanism. Asp-351 serves as a coordination point for substrate. A pyridoxal 5'-phosphate-binding site is contributed by Tyr-379.

Belongs to the Orn/Lys/Arg decarboxylase class-II family. Homodimer. Only the dimer is catalytically active, as the active sites are constructed of residues from both monomers. Requires pyridoxal 5'-phosphate as cofactor.

The enzyme catalyses L-ornithine + H(+) = putrescine + CO2. It functions in the pathway amine and polyamine biosynthesis; putrescine biosynthesis via L-ornithine pathway; putrescine from L-ornithine: step 1/1. With respect to regulation, inhibited by antizymes (AZs) in response to polyamine levels. AZs inhibit the assembly of the functional homodimer by binding to ODC monomers and targeting them for ubiquitin-independent proteolytic destruction by the 26S proteasome. Functionally, catalyzes the first and rate-limiting step of polyamine biosynthesis that converts ornithine into putrescine, which is the precursor for the polyamines, spermidine and spermine. Polyamines are essential for cell proliferation and are implicated in cellular processes, ranging from DNA replication to apoptosis. In Gallus gallus (Chicken), this protein is Ornithine decarboxylase (ODC1).